We begin with the raw amino-acid sequence, 341 residues long: Peptidoglycan recognition protein 3 (341 aa).

Positions Met-1–Ala-17 are cleaved as a signal peptide. N-acetylmuramoyl-L-alanine amidase domains are found at residues Thr-77–Pro-179 and Pro-200–Pro-325. Asn-113 carries an N-linked (GlcNAc...) asparagine glycan. Intrachain disulfides connect Cys-178-Cys-300, Cys-194-Cys-238, and Cys-214-Cys-220. The peptidoglycan site is built by His-231, Arg-235, and Tyr-242. The interval His-264–Asn-269 is interaction with murein.

It belongs to the N-acetylmuramoyl-L-alanine amidase 2 family. In terms of assembly, monomer. Homodimer; disulfide-linked. Heterodimer with PGLYRP4; disulfide-linked. N-glycosylated. As to expression, detected in skin epidermis, eccrine sweat glands and ducts, ciliary body epithelial cells of the eye, in small intestine, colon, stomach and in mature epithelial cells of the tongue (at protein level). Highly expressed in skin and esophagus, expressed also in tonsils and thymus and to a much lesser extent in the stomach, descending colon, rectum and brain.

The protein localises to the secreted. Pattern receptor that binds to murein peptidoglycans (PGN) of Gram-positive bacteria. Has bactericidal activity towards Gram-positive bacteria. May kill Gram-positive bacteria by interfering with peptidoglycan biosynthesis. Also binds to Gram-negative bacteria, and has bacteriostatic activity towards Gram-negative bacteria. Plays a role in innate immunity. The sequence is that of Peptidoglycan recognition protein 3 (PGLYRP3) from Homo sapiens (Human).